Consider the following 58-residue polypeptide: Large ribosomal subunit protein bL32 (58 aa).

This sequence belongs to the bacterial ribosomal protein bL32 family.

This chain is Large ribosomal subunit protein bL32, found in Anaplasma phagocytophilum (strain HZ).